A 232-amino-acid polypeptide reads, in one-letter code: tRNA1(Val) (adenine(37)-N6)-methyltransferase (232 aa).

Belongs to the methyltransferase superfamily. tRNA (adenine-N(6)-)-methyltransferase family.

Its subcellular location is the cytoplasm. It catalyses the reaction adenosine(37) in tRNA1(Val) + S-adenosyl-L-methionine = N(6)-methyladenosine(37) in tRNA1(Val) + S-adenosyl-L-homocysteine + H(+). Specifically methylates the adenine in position 37 of tRNA(1)(Val) (anticodon cmo5UAC). The chain is tRNA1(Val) (adenine(37)-N6)-methyltransferase from Haemophilus influenzae (strain 86-028NP).